A 947-amino-acid polypeptide reads, in one-letter code: Protein translocase subunit SecA 1 (947 aa).

Residues Q83, 101 to 105 (GEGKT), and D490 each bind ATP. Residues 860–947 (AKAQEQTGQG…KTSKPTRRRG (88 aa)) are disordered. The span at 925–934 (TRRERREAAR) shows a compositional bias: basic and acidic residues. Residues 935–947 (KQAKTSKPTRRRG) are compositionally biased toward basic residues.

It belongs to the SecA family. Monomer and homodimer. Part of the essential Sec protein translocation apparatus which comprises SecA, SecYEG and auxiliary proteins SecDF. Other proteins may also be involved.

It is found in the cell membrane. Its subcellular location is the cytoplasm. It carries out the reaction ATP + H2O + cellular proteinSide 1 = ADP + phosphate + cellular proteinSide 2.. Part of the Sec protein translocase complex. Interacts with the SecYEG preprotein conducting channel. Has a central role in coupling the hydrolysis of ATP to the transfer of proteins into and across the cell membrane, serving as an ATP-driven molecular motor driving the stepwise translocation of polypeptide chains across the membrane. The polypeptide is Protein translocase subunit SecA 1 (Mycobacterium sp. (strain JLS)).